Consider the following 398-residue polypeptide: tRNA pseudouridine synthase D (398 aa).

Residue aspartate 76 is the Nucleophile of the active site. In terms of domain architecture, TRUD spans 151–360 (GVPNFFGEQR…MPGERRPLRI (210 aa)).

It belongs to the pseudouridine synthase TruD family.

It catalyses the reaction uridine(13) in tRNA = pseudouridine(13) in tRNA. Its function is as follows. Responsible for synthesis of pseudouridine from uracil-13 in transfer RNAs. This is tRNA pseudouridine synthase D from Syntrophotalea carbinolica (strain DSM 2380 / NBRC 103641 / GraBd1) (Pelobacter carbinolicus).